A 299-amino-acid chain; its full sequence is 5,10-dihydrophenazine-1-carboxylate 9-dimethylallyltransferase (299 aa).

The protein belongs to the aromatic prenyltransferase family.

The enzyme catalyses 5,10-dihydrophenazine 1-carboxylate + dimethylallyl diphosphate = 5,10-dihydro-9-dimethylallylphenazine 1-carboxylate + diphosphate. Its pathway is antibiotic biosynthesis; phenazine biosynthesis. Its activity is regulated as follows. Does not require magnesium or any other divalent metal ions for activity. Involved in the biosynthesis of prenylated phenazines. Catalyzes the transfer of a dimethylallyl moiety to C-9 of 5,10-dihydrophenazine 1-carboxylate (dihydro-PCA). Specific for both dimethylallyl diphosphate and dihydro-PCA. The protein is 5,10-dihydrophenazine-1-carboxylate 9-dimethylallyltransferase of Streptomyces anulatus (Streptomyces chrysomallus).